Reading from the N-terminus, the 108-residue chain is MNLWEFRFGKSFLFIPNFIMKVLAFEELALFDIFDSLINVKINIYENGIECGFSFYKWDEFKGYKIEDKYIRLISKFPLIIRLIFVRDIYLRYDEELEGIIEKHLRQK.

A signal peptide spans 1–24; sequence MNLWEFRFGKSFLFIPNFIMKVLA.

The protein to M.jannaschii MJ0803.

This is an uncharacterized protein from Methanocaldococcus jannaschii (strain ATCC 43067 / DSM 2661 / JAL-1 / JCM 10045 / NBRC 100440) (Methanococcus jannaschii).